Consider the following 64-residue polypeptide: Disintegrin VA6 (64 aa).

The 64-residue stretch at 1–64 (NSANPCCDPV…SDCPRNPYKS (64 aa)) folds into the Disintegrin domain. Disulfide bonds link cysteine 6-cysteine 29, cysteine 20-cysteine 26, cysteine 25-cysteine 50, and cysteine 38-cysteine 57. The short motif at 42–44 (RGD) is the Cell attachment site element.

The protein belongs to the venom metalloproteinase (M12B) family. P-II subfamily. P-IId sub-subfamily. Homodimer; disulfide-linked. As to expression, expressed by the venom gland.

Its subcellular location is the secreted. Poor inhibitor of platelet aggregation. The disintegrin inhibits the adhesion of cells expressing the RGD-dependent integrin alpha-5/beta-1 (ITGA5/ITGB1) to immobilized fibronectin. Inhibition on alpha-IIb/beta-3 (ITGA2B/ITGB3) is low, and there is no inhibition on alpha-1/beta-1 (ITGA1/ITGB1), alpha-2/beta-1 (ITGA2/ITGB1) and alpha-6/beta-1 (ITGA6/ITGB1). The chain is Disintegrin VA6 from Vipera ammodytes ammodytes (Western sand viper).